The following is a 264-amino-acid chain: Synaptophysin-like protein 2 (264 aa).

Topologically, residues 1 to 33 (MSSTESPSRAADKSPRQQVDRLLEGLRWRRLEE) are cytoplasmic. Positions 30–238 (RLEEPLGFIK…NCWFVFKETP (209 aa)) constitute an MARVEL domain. Residues 34–54 (PLGFIKVLQWLFAIFAFGSCG) traverse the membrane as a helical segment. Topologically, residues 55 to 116 (SYSGETGAMV…LMGDFSAPAE (62 aa)) are vesicular. Residues 117 to 137 (FFVTLGIFSFFYTMAALVVYL) form a helical membrane-spanning segment. Residues 138 to 150 (RFHKLYTENKRFP) lie on the Cytoplasmic side of the membrane. The helical transmembrane segment at 151 to 171 (LVDFCVTVSFTFFWLVAAAAW) threads the bilayer. Topologically, residues 172-213 (GKGLTDVKGATRPSSLTAAMSVCHGEEAVCSAGATPSMGLAN) are vesicular. Asn213 carries an N-linked (GlcNAc...) asparagine glycan. A helical transmembrane segment spans residues 214–234 (ISVLFGFINFFLWAGNCWFVF). Over 235-264 (KETPWHGQGQDQGQGPSQESAAEQGAVEKQ) the chain is Cytoplasmic. A disordered region spans residues 242–264 (QGQDQGQGPSQESAAEQGAVEKQ).

Belongs to the synaptophysin/synaptobrevin family. In terms of tissue distribution, skeletal muscle.

It is found in the membrane. Functionally, involved in communication between the T-tubular and junctional sarcoplasmic reticulum (SR) membranes. This chain is Synaptophysin-like protein 2 (SYPL2), found in Oryctolagus cuniculus (Rabbit).